The following is a 113-amino-acid chain: Integration host factor subunit alpha (113 aa).

The tract at residues G59 to I80 is disordered.

The protein belongs to the bacterial histone-like protein family. In terms of assembly, heterodimer of an alpha and a beta chain.

Its function is as follows. This protein is one of the two subunits of integration host factor, a specific DNA-binding protein that functions in genetic recombination as well as in transcriptional and translational control. This is Integration host factor subunit alpha from Bordetella bronchiseptica (strain ATCC BAA-588 / NCTC 13252 / RB50) (Alcaligenes bronchisepticus).